The primary structure comprises 24 residues: Ascaphin-7 (24 aa).

As to expression, expressed by the skin glands.

It is found in the secreted. Antimicrobial peptide that shows higher potency against Gram-negative bacteria than against Gram-positive bacteria. Has a very week hemolytic activity. The polypeptide is Ascaphin-7 (Ascaphus truei (Coastal tailed frog)).